The chain runs to 337 residues: S-adenosylmethionine:tRNA ribosyltransferase-isomerase (337 aa).

It belongs to the QueA family. Monomer.

Its subcellular location is the cytoplasm. The enzyme catalyses 7-aminomethyl-7-carbaguanosine(34) in tRNA + S-adenosyl-L-methionine = epoxyqueuosine(34) in tRNA + adenine + L-methionine + 2 H(+). The protein operates within tRNA modification; tRNA-queuosine biosynthesis. Transfers and isomerizes the ribose moiety from AdoMet to the 7-aminomethyl group of 7-deazaguanine (preQ1-tRNA) to give epoxyqueuosine (oQ-tRNA). The sequence is that of S-adenosylmethionine:tRNA ribosyltransferase-isomerase from Legionella pneumophila (strain Lens).